The sequence spans 97 residues: MSLLDAHIPQLIASHTAFAAKAGLMRHTIGQAEQQAMSAQAFHQGESAAAFQGAHARFVAAAAKVNTLLDIAQANLGEAAGTYVAADAAAASSYTGF.

Belongs to the WXG100 family. CFP-10 subfamily. In terms of assembly, forms a tight complex with EsxR. Exists in heterodimeric and heterotetrameric forms.

The protein localises to the secreted. The sequence is that of ESAT-6-like protein EsxS from Mycobacterium tuberculosis (strain ATCC 25618 / H37Rv).